We begin with the raw amino-acid sequence, 262 residues long: LysM and putative peptidoglycan-binding domain-containing protein 3 (262 aa).

Residues 1–218 (MSGRIPNHGY…PYHGADWSLG (218 aa)) are Extracellular-facing. The LysM domain maps to 70–114 (ISRDICEGDTLNSIALQYCCTVADLKRANNFLNEQDFFALRTIKI). The chain crosses the membrane as a helical span at residues 219–239 (WWTAVAIMVFVGIITPLFYFL). Topologically, residues 240 to 262 (YYEVLMKVNTSHTLNSIEKSGPS) are cytoplasmic.

Its subcellular location is the cell membrane. It localises to the golgi apparatus. Essential for Golgi structural integrity. This chain is LysM and putative peptidoglycan-binding domain-containing protein 3 (lysmd3), found in Xenopus tropicalis (Western clawed frog).